The primary structure comprises 114 residues: Beta-microseminoprotein (114 aa).

An N-terminal signal peptide occupies residues 1 to 20 (MNVLLGSVVIFATFVTLCNA). Intrachain disulfides connect Cys22-Cys70, Cys38-Cys62, Cys57-Cys93, Cys60-Cys69, and Cys84-Cys107.

It belongs to the beta-microseminoprotein family. In terms of assembly, homodimer; Interacts with PI16. In terms of tissue distribution, strongly expressed in prostate, liver, kidney, breast and penis. Also expressed in pancreas, esophagus, stomach, deodenum, colon, trachea, lung, salivary glands and fallopian tube. PSP94 is expressed in lung and breast, whereas PSP57 is found in kidney and bladder.

Its subcellular location is the secreted. The polypeptide is Beta-microseminoprotein (MSMB) (Homo sapiens (Human)).